The following is a 258-amino-acid chain: Putative phosphoenolpyruvate synthase regulatory protein (258 aa).

Position 146-153 (146-153 (GVSRVGKT)) interacts with ADP.

This sequence belongs to the pyruvate, phosphate/water dikinase regulatory protein family. PSRP subfamily.

It carries out the reaction [pyruvate, water dikinase] + ADP = [pyruvate, water dikinase]-phosphate + AMP + H(+). The catalysed reaction is [pyruvate, water dikinase]-phosphate + phosphate + H(+) = [pyruvate, water dikinase] + diphosphate. Its function is as follows. Bifunctional serine/threonine kinase and phosphorylase involved in the regulation of the phosphoenolpyruvate synthase (PEPS) by catalyzing its phosphorylation/dephosphorylation. The polypeptide is Putative phosphoenolpyruvate synthase regulatory protein (Thiobacillus denitrificans (strain ATCC 25259 / T1)).